A 247-amino-acid polypeptide reads, in one-letter code: 3-deoxy-manno-octulosonate cytidylyltransferase (247 aa).

It belongs to the KdsB family.

It is found in the cytoplasm. It carries out the reaction 3-deoxy-alpha-D-manno-oct-2-ulosonate + CTP = CMP-3-deoxy-beta-D-manno-octulosonate + diphosphate. It participates in nucleotide-sugar biosynthesis; CMP-3-deoxy-D-manno-octulosonate biosynthesis; CMP-3-deoxy-D-manno-octulosonate from 3-deoxy-D-manno-octulosonate and CTP: step 1/1. The protein operates within bacterial outer membrane biogenesis; lipopolysaccharide biosynthesis. In terms of biological role, activates KDO (a required 8-carbon sugar) for incorporation into bacterial lipopolysaccharide in Gram-negative bacteria. This chain is 3-deoxy-manno-octulosonate cytidylyltransferase, found in Afipia carboxidovorans (strain ATCC 49405 / DSM 1227 / KCTC 32145 / OM5) (Oligotropha carboxidovorans).